Consider the following 241-residue polypeptide: U2 small nuclear ribonucleoprotein B'' (241 aa).

An RRM 1 domain is found at 12 to 91 (QTLYVNNLYE…RPMKIQYCKS (80 aa)). The segment covering 99 to 126 (LDGTYMEKKREREENDKKGSNKKQDRKS) has biased composition (basic and acidic residues). A disordered region spans residues 99-169 (LDGTYMEKKR…PRDDPPNKTL (71 aa)). The segment covering 129–152 (QQQQQQKRPGAPTSTTSTTSPTTS) has biased composition (low complexity). The region spanning 167–241 (KTLFVENLPD…KPMVVSFAAQ (75 aa)) is the RRM 2 domain.

The protein belongs to the RRM U1 A/B'' family. As to quaternary structure, identified in the spliceosome B complex. Identified in the spliceosome C complex.

The protein localises to the nucleus. Involved in pre-mRNA splicing as component of the spliceosome. Associated with sn-RNP U2, where it contributes to the binding of stem loop IV of U2 snRNA. This chain is U2 small nuclear ribonucleoprotein B'' (snrpb2), found in Dictyostelium discoideum (Social amoeba).